Reading from the N-terminus, the 191-residue chain is Thymidine kinase (191 aa).

Residues 9-16 (GTMNSGKT) and 85-88 (DEAQ) contribute to the ATP site. Glu-86 acts as the Proton acceptor in catalysis. Cys-143, Cys-146, Cys-180, and His-183 together coordinate Zn(2+).

The protein belongs to the thymidine kinase family. Homotetramer.

Its subcellular location is the cytoplasm. The catalysed reaction is thymidine + ATP = dTMP + ADP + H(+). The polypeptide is Thymidine kinase (Streptococcus gordonii (strain Challis / ATCC 35105 / BCRC 15272 / CH1 / DL1 / V288)).